A 512-amino-acid polypeptide reads, in one-letter code: Cytochrome P450 monooxygenase gliC (512 aa).

Residues 1–19 form the signal peptide; that stretch reads MAFTLTILVPCMVLALVAA. N-linked (GlcNAc...) asparagine glycosylation is found at Asn118, Asn421, and Asn434. Heme is bound at residue Cys452.

This sequence belongs to the cytochrome P450 family. Requires heme as cofactor.

Its pathway is mycotoxin biosynthesis. Its function is as follows. Cytochrome P450 monooxygenase; part of the gene cluster that mediates the biosynthesis of gliotoxin, a member of the epipolythiodioxopiperazine (ETP) class of toxins characterized by a disulfide bridged cyclic dipeptide. The first step in gliotoxin biosynthesis is the condensation of serine and phenylalanine to form the cyclo-L-phenylalanyl-L-serine diketopiperazine (DKP) by the NRPS gliP. GliP is also able to produce the DKP cyclo-L-tryptophanyl-L-serine, suggesting that the substrate specificity of the first adenylation (A) domain in gliP is sufficiently relaxed to accommodate both L-Phe and L-Trp. The cytochrome P450 monooxygenase gliC has been shown to catalyze the subsequent hydroxylation of the alpha-carbon of L-Phe in cyclo-L-phenylalanyl-L-serine whereas the second cytochrome P450 enzyme, gliF, is presumably involved in the modification of the DKP side chain. The glutathione S-transferase (GST) gliG then forms a bis-glutathionylated biosynthetic intermediate which is responsible for the sulfurization of gliotoxin. This bis-glutathionylated intermediate is subsequently processed by the gamma-glutamyl cyclotransferase gliK to remove both gamma-glutamyl moieties. Subsequent processing via gliI yields a biosynthetic intermediate, which is N-methylated via the N-methyltransferase gliN, before the gliotoxin oxidoreductase gliT-mediated disulfide bridge closure. GliN-mediated amide methylation confers stability to ETP, damping the spontaneous formation of tri- and tetrasulfides. Intracellular dithiol gliotoxin oxidized by gliT is subsequently effluxed by gliA. Gliotoxin contributes to pathogenesis during invasive aspergillosis. In macrophages and neutrophils, gliotoxin showed inhibition of various different cell functions including cytokine production, antigen presentation, phagocytosis, and production of reactive oxygen species. The protein is Cytochrome P450 monooxygenase gliC of Aspergillus fumigatus (strain ATCC MYA-4609 / CBS 101355 / FGSC A1100 / Af293) (Neosartorya fumigata).